Consider the following 201-residue polypeptide: MADVEQPEAGPSEPQGREVTYCGVCSLPPEYCEYGGTVKKCQDWLQRNNQEMYDRIWSPEALQAATAALSVEAQQRAEKDAKKKAAKAEAAEAKHADKLKKSVVTVKRIERNKRKYVTSVSGLESFGLELKKVAKDFGKKFATGSSVTKVASGGEEIVVQGDVSDEIKEFIVEKYKDVPEDNIELVDDKKNKKKEAATAAG.

Residues 104–175 (VTVKRIERNK…EIKEFIVEKY (72 aa)) form the SUI1 domain.

Belongs to the DENR family. Interacts with the 40S ribosomal subunit.

It localises to the cytoplasm. This chain is Translation machinery-associated protein 22 (TMA22), found in Pyricularia oryzae (strain 70-15 / ATCC MYA-4617 / FGSC 8958) (Rice blast fungus).